Here is an 88-residue protein sequence, read N- to C-terminus: Small ribosomal subunit protein uS17 (88 aa).

The protein belongs to the universal ribosomal protein uS17 family. As to quaternary structure, part of the 30S ribosomal subunit.

Functionally, one of the primary rRNA binding proteins, it binds specifically to the 5'-end of 16S ribosomal RNA. The polypeptide is Small ribosomal subunit protein uS17 (Brevibacillus brevis (strain 47 / JCM 6285 / NBRC 100599)).